Reading from the N-terminus, the 374-residue chain is Queuine tRNA-ribosyltransferase (374 aa).

Asp90 acts as the Proton acceptor in catalysis. Substrate-binding positions include Asp90–Phe94, Asp144, Gln193, and Gly220. The segment at Gly251–Asp257 is RNA binding. The active-site Nucleophile is the Asp270. The interval Thr275–Arg279 is RNA binding; important for wobble base 34 recognition. The Zn(2+) site is built by Cys308, Cys310, Cys313, and His339.

Belongs to the queuine tRNA-ribosyltransferase family. In terms of assembly, homodimer. Within each dimer, one monomer is responsible for RNA recognition and catalysis, while the other monomer binds to the replacement base PreQ1. The cofactor is Zn(2+).

It carries out the reaction 7-aminomethyl-7-carbaguanine + guanosine(34) in tRNA = 7-aminomethyl-7-carbaguanosine(34) in tRNA + guanine. The protein operates within tRNA modification; tRNA-queuosine biosynthesis. Its function is as follows. Catalyzes the base-exchange of a guanine (G) residue with the queuine precursor 7-aminomethyl-7-deazaguanine (PreQ1) at position 34 (anticodon wobble position) in tRNAs with GU(N) anticodons (tRNA-Asp, -Asn, -His and -Tyr). Catalysis occurs through a double-displacement mechanism. The nucleophile active site attacks the C1' of nucleotide 34 to detach the guanine base from the RNA, forming a covalent enzyme-RNA intermediate. The proton acceptor active site deprotonates the incoming PreQ1, allowing a nucleophilic attack on the C1' of the ribose to form the product. After dissociation, two additional enzymatic reactions on the tRNA convert PreQ1 to queuine (Q), resulting in the hypermodified nucleoside queuosine (7-(((4,5-cis-dihydroxy-2-cyclopenten-1-yl)amino)methyl)-7-deazaguanosine). In Campylobacter fetus subsp. fetus (strain 82-40), this protein is Queuine tRNA-ribosyltransferase.